Consider the following 261-residue polypeptide: L-erythrulose-1-phosphate isomerase (261 aa).

Residue histidine 99 is the Electrophile of the active site. Residue glutamate 172 is the Proton acceptor of the active site.

This sequence belongs to the triosephosphate isomerase family.

The catalysed reaction is L-erythrulose 1-phosphate = D-erythrulose 4-phosphate. It participates in carbohydrate metabolism. Involved in catabolism of D-apiose. Catalyzes the isomerization of L-erythrulose 1-phosphate to D-erythrulose 4-phosphate. This chain is L-erythrulose-1-phosphate isomerase, found in Rhizobium rhizogenes (strain K84 / ATCC BAA-868) (Agrobacterium radiobacter).